Here is a 683-residue protein sequence, read N- to C-terminus: Synaptic vesicle glycoprotein 2B (683 aa).

The disordered stretch occupies residues 1–42; it reads MDDYKYQDNYGGYAPSDGYYRGNESNPEEDAQSDVTEGHDEE. Residues 1–108 lie on the Cytoplasmic side of the membrane; that stretch reads MDDYKYQDNY…MDECGHGRFQ (108 aa). Serine 33 is modified (phosphoserine). Threonine 36 bears the Phosphothreonine mark. A helical transmembrane segment spans residues 109–129; it reads WILFFVLGLALMADGVEVFVV. Residues 130–148 lie on the Extracellular side of the membrane; it reads SFALPSAEKDMCLSSSKKG. Residues 149-169 traverse the membrane as a helical segment; the sequence is MLGMIVYLGMMAGAFILGGLA. The Cytoplasmic portion of the chain corresponds to 170 to 182; it reads DKLGRKRVLSMSL. Residues 183-203 form a helical membrane-spanning segment; sequence AVNASFASLSSFVQGYGAFLF. Over 204–205 the chain is Extracellular; the sequence is CR. A helical membrane pass occupies residues 206 to 226; the sequence is LISGIGIGGALPIVFAYFSEF. Topologically, residues 227-237 are cytoplasmic; that stretch reads LSREKRGEHLS. Residues 238–258 form a helical membrane-spanning segment; that stretch reads WLGIFWMTGGLYASAMAWSII. Over 259 to 277 the chain is Extracellular; it reads PHYGWGFSMGTNYHFHSWR. The helical transmembrane segment at 278–298 threads the bilayer; the sequence is VFVIVCALPCTVSMVALKFMP. Residues 299–390 are Cytoplasmic-facing; that stretch reads ESPRFLLEMG…CVMGPYRMNT (92 aa). The chain crosses the membrane as a helical span at residues 391 to 411; it reads LILAVVWFAMAFSYYGLTVWF. Topologically, residues 412–535 are extracellular; that stretch reads PDMIRYFQDE…CHMDLEQDND (124 aa). Tyrosine 423 carries the phosphotyrosine modification. N-linked (GlcNAc...) asparagine glycans are attached at residues asparagine 441, asparagine 491, and asparagine 516. The helical transmembrane segment at 536–556 threads the bilayer; the sequence is FLIYLVSFLGSLSVLPGNIIS. The Cytoplasmic segment spans residues 557–565; it reads ALLMDRIGR. A helical transmembrane segment spans residues 566 to 586; the sequence is LKMIGGSMLISAVCCFFLFFG. At 587-592 the chain is on the extracellular side; that stretch reads NSESAM. The helical transmembrane segment at 593 to 613 threads the bilayer; it reads IGWQCLFCGTSIAAWNALDVI. At 614–626 the chain is on the cytoplasmic side; sequence TVELYPTNQRATA. The helical transmembrane segment at 627–649 threads the bilayer; sequence FGILNGLCKFGAILGNTIFASFV. Residues 650 to 653 lie on the Extracellular side of the membrane; sequence GITK. Residues 654-672 traverse the membrane as a helical segment; the sequence is VVPILLAAASLVGGGLIAL. The Cytoplasmic portion of the chain corresponds to 673 to 683; it reads RLPETREQVLM.

Belongs to the major facilitator superfamily. In terms of assembly, interacts with SYT1 in a calcium-independent manner. Forms a complex with SYT1, syntaxin-1 and SNAP25. As to quaternary structure, (Microbial infection) Interacts with C.botulinum neurotoxin type A2 (BoNT/A, botA). Interaction is improved by glycosylation of SV2. N-glycosylated. In terms of processing, the N-terminal cytoplasmic domain is phosphorylated by CK1.

It is found in the cytoplasmic vesicle. The protein resides in the secretory vesicle. The protein localises to the synaptic vesicle membrane. It localises to the acrosome. Functionally, probably plays a role in the control of regulated secretion in neural and endocrine cells. In terms of biological role, (Microbial infection) Receptor for the C.botulinum neurotoxin type A2 (BoNT/A, botA); glycosylation is not essential but enhances the interaction. Probably also serves as a receptor for the closely related C.botulinum neurotoxin type A1. This is Synaptic vesicle glycoprotein 2B (SV2B) from Homo sapiens (Human).